Consider the following 262-residue polypeptide: Hydroxyethylthiazole kinase (262 aa).

Substrate is bound at residue M44. 2 residues coordinate ATP: R118 and S166. G193 lines the substrate pocket.

This sequence belongs to the Thz kinase family. The cofactor is Mg(2+).

It catalyses the reaction 5-(2-hydroxyethyl)-4-methylthiazole + ATP = 4-methyl-5-(2-phosphooxyethyl)-thiazole + ADP + H(+). The protein operates within cofactor biosynthesis; thiamine diphosphate biosynthesis; 4-methyl-5-(2-phosphoethyl)-thiazole from 5-(2-hydroxyethyl)-4-methylthiazole: step 1/1. Its function is as follows. Catalyzes the phosphorylation of the hydroxyl group of 4-methyl-5-beta-hydroxyethylthiazole (THZ). This is Hydroxyethylthiazole kinase from Chlamydia abortus (strain DSM 27085 / S26/3) (Chlamydophila abortus).